Consider the following 270-residue polypeptide: Sulfur carrier protein FdhD (270 aa).

Cysteine 108 serves as the catalytic Cysteine persulfide intermediate. Residue 247–252 (FIRDGR) coordinates Mo-bis(molybdopterin guanine dinucleotide).

The protein belongs to the FdhD family.

It localises to the cytoplasm. Functionally, required for formate dehydrogenase (FDH) activity. Acts as a sulfur carrier protein that transfers sulfur from IscS to the molybdenum cofactor prior to its insertion into FDH. The chain is Sulfur carrier protein FdhD from Halalkalibacterium halodurans (strain ATCC BAA-125 / DSM 18197 / FERM 7344 / JCM 9153 / C-125) (Bacillus halodurans).